A 1653-amino-acid polypeptide reads, in one-letter code: Ciliary rootlet coiled-coil protein 2 (1653 aa).

The segment covering 1 to 17 (MSSASSEPGNGDASQQP) has biased composition (polar residues). Residues 1–57 (MSSASSEPGNGDASQQPLLGLDTVIQRLEDTILSPTASREDRALTVRGEGRQASPTP) are disordered. The span at 38–50 (SREDRALTVRGEG) shows a compositional bias: basic and acidic residues. 2 coiled-coil regions span residues 86-145 (VARV…SELE) and 310-351 (KVAL…LVAQ). The tract at residues 367–396 (LGEPRRPLRSPQRATSPHQGASPPHICSPA) is disordered. Positions 423–1215 (LKSSQALVAS…QRKLAEVEAA (793 aa)) form a coiled coil. Residues 1302-1356 (GLQRQSPWASPEQPGSPTKGSDSSQALPGQQGTSPPARPHSPLRWPSPTPGGRSS) are disordered. Polar residues predominate over residues 1304–1335 (QRQSPWASPEQPGSPTKGSDSSQALPGQQGTS). Residues 1361–1570 (VATVQDILRD…QAQMTEMEQA (210 aa)) are a coiled coil.

It belongs to the rootletin family.

The sequence is that of Ciliary rootlet coiled-coil protein 2 from Homo sapiens (Human).